The chain runs to 122 residues: Holo-[acyl-carrier-protein] synthase (122 aa).

Positions 8 and 52 each coordinate Mg(2+).

This sequence belongs to the P-Pant transferase superfamily. AcpS family. Requires Mg(2+) as cofactor.

The protein localises to the cytoplasm. It carries out the reaction apo-[ACP] + CoA = holo-[ACP] + adenosine 3',5'-bisphosphate + H(+). Functionally, transfers the 4'-phosphopantetheine moiety from coenzyme A to a Ser of acyl-carrier-protein. This chain is Holo-[acyl-carrier-protein] synthase, found in Lachnoclostridium phytofermentans (strain ATCC 700394 / DSM 18823 / ISDg) (Clostridium phytofermentans).